Consider the following 318-residue polypeptide: Protein phosphatase 1 regulatory subunit 3C (318 aa).

The PP1-binding motif motif lies at 84–87; the sequence is RVVF. The segment at 141–263 is interaction with EPM2A; sequence PSADYLSFRN…YRIVHVQWKP (123 aa). Residues 149–257 form the CBM21 domain; sequence RNHFQKNSVC…NNEGQNYRIV (109 aa).

In terms of assembly, interacts with PPP1CC catalytic subunit of PP1 and associates with glycogen. Forms complexes with glycogen phosphorylase, glycogen synthase and phosphorylase kinase which is necessary for its regulation of PP1 activity. Also interacts with EPM2A/laforin. Ubiquitinated by NHLRC1/malin in a EPM2A/laforin-dependent manner.

Functionally, acts as a glycogen-targeting subunit for PP1 and regulates its activity. Activates glycogen synthase, reduces glycogen phosphorylase activity and limits glycogen breakdown. Dramatically increases basal and insulin-stimulated glycogen synthesis upon overexpression in a variety of cell types. The sequence is that of Protein phosphatase 1 regulatory subunit 3C from Bos taurus (Bovine).